We begin with the raw amino-acid sequence, 632 residues long: MHLSEITHPNQLHGLSIQELKQIARQIRDKHLETVAATGGHLGPGLGVVELTLGLYQTLDLDRDRVIWDVGHQAYPHKLLTGRYDRFHTLRQKDGVAGYLNRKESEFDHFGAGHASTSISAALGMALARDQRGETHKVVAIIGDGALTGGMSLEAINHAGHLPHTNLMVVLNDNEMSISPNVGALSRYLNKMRLNPQVQFITENLEEQIKHFVGDSITPELGRLKGGMKRLAVPKVGAVFEELGFTYVGPVDGHNLEELIATFNAAHKIPGPVLVHVATVKGKGYAIAEKDQVGYHAQNPFNLATGKAMPSSKPKPPSYSKVFGDTLTKLAEADSRIIGITAAMATGTGLDILQKHLPDQYIDVGIAEQHAVTMAAGLACEGMRPVVTIYSTFLQRAYDQIVHDVCIQSLPVLFCMDRAGIVGADGPTHQGMYDIAYLRCLPNMVLMAPKDEAELQQMLVTGINYMDGPIGLRYPRGNGYGVALMEEGWEPLPIGKAEVLRQGDDLLMLAYGSMVYPTLQAAEILREHGIAATVVNARFAKPLDTELILPLAEKLGRVVTVEEGCLIGGFGSAVLEALQDQEILVPVTRIGIPDILVEHATPDQSKAQLGLTSAQIAERVLAKTQQPAPSRV.

Residues His-72 and Gly-113–Ala-115 each bind thiamine diphosphate. Position 144 (Asp-144) interacts with Mg(2+). Thiamine diphosphate contacts are provided by residues Gly-145 to Ala-146, Asn-174, Tyr-285, and Glu-368. Residue Asn-174 participates in Mg(2+) binding.

It belongs to the transketolase family. DXPS subfamily. As to quaternary structure, homodimer. Requires Mg(2+) as cofactor. Thiamine diphosphate is required as a cofactor.

The catalysed reaction is D-glyceraldehyde 3-phosphate + pyruvate + H(+) = 1-deoxy-D-xylulose 5-phosphate + CO2. The protein operates within metabolic intermediate biosynthesis; 1-deoxy-D-xylulose 5-phosphate biosynthesis; 1-deoxy-D-xylulose 5-phosphate from D-glyceraldehyde 3-phosphate and pyruvate: step 1/1. Functionally, catalyzes the acyloin condensation reaction between C atoms 2 and 3 of pyruvate and glyceraldehyde 3-phosphate to yield 1-deoxy-D-xylulose-5-phosphate (DXP). The sequence is that of 1-deoxy-D-xylulose-5-phosphate synthase from Cyanothece sp. (strain PCC 7425 / ATCC 29141).